We begin with the raw amino-acid sequence, 508 residues long: Photosystem II CP47 reaction center protein (508 aa).

6 consecutive transmembrane segments (helical) span residues 21-36 (SVHI…WAGS), 101-115 (IILA…MWHW), 140-156 (GIHL…FGAF), 203-218 (IAAG…FHLS), 237-252 (VLSS…AFVV), and 457-472 (CFAL…HGAR).

This sequence belongs to the PsbB/PsbC family. PsbB subfamily. As to quaternary structure, PSII is composed of 1 copy each of membrane proteins PsbA, PsbB, PsbC, PsbD, PsbE, PsbF, PsbH, PsbI, PsbJ, PsbK, PsbL, PsbM, PsbT, PsbX, PsbY, PsbZ, Psb30/Ycf12, at least 3 peripheral proteins of the oxygen-evolving complex and a large number of cofactors. It forms dimeric complexes. The cofactor is Binds multiple chlorophylls. PSII binds additional chlorophylls, carotenoids and specific lipids..

The protein resides in the plastid. It is found in the chloroplast thylakoid membrane. Its function is as follows. One of the components of the core complex of photosystem II (PSII). It binds chlorophyll and helps catalyze the primary light-induced photochemical processes of PSII. PSII is a light-driven water:plastoquinone oxidoreductase, using light energy to abstract electrons from H(2)O, generating O(2) and a proton gradient subsequently used for ATP formation. In Mesostigma viride (Green alga), this protein is Photosystem II CP47 reaction center protein.